The following is a 216-amino-acid chain: Probable GH family 25 lysozyme 5 (216 aa).

The signal sequence occupies residues 1–20 (MRFIISLLFVFTLIFNLAFS). The Ch-type lysozyme domain occupies 21-216 (HIGIDVSSGT…GLGIDKNYWE (196 aa)). Residue aspartate 25 is part of the active site. N-linked (GlcNAc...) asparagine glycosylation occurs at asparagine 31. Active-site residues include aspartate 113 and glutamate 115.

The protein belongs to the glycosyl hydrolase 25 family.

The protein resides in the secreted. It catalyses the reaction Hydrolysis of (1-&gt;4)-beta-linkages between N-acetylmuramic acid and N-acetyl-D-glucosamine residues in a peptidoglycan and between N-acetyl-D-glucosamine residues in chitodextrins.. In Dictyostelium discoideum (Social amoeba), this protein is Probable GH family 25 lysozyme 5.